A 183-amino-acid chain; its full sequence is Archaemetzincin (183 aa).

Residue His131 coordinates Zn(2+). Glu132 functions as the Proton acceptor in the catalytic mechanism. 5 residues coordinate Zn(2+): His135, His141, Cys142, Cys147, and Cys166.

The protein belongs to the peptidase M54 family. In terms of assembly, monomer. Requires Zn(2+) as cofactor.

Probable zinc metalloprotease whose natural substrate is unknown. In Saccharolobus solfataricus (strain ATCC 35092 / DSM 1617 / JCM 11322 / P2) (Sulfolobus solfataricus), this protein is Archaemetzincin.